The chain runs to 161 residues: Ribosome maturation factor RimP (161 aa).

This sequence belongs to the RimP family.

It is found in the cytoplasm. Its function is as follows. Required for maturation of 30S ribosomal subunits. In Myxococcus xanthus (strain DK1622), this protein is Ribosome maturation factor RimP.